Reading from the N-terminus, the 78-residue chain is Large ribosomal subunit protein bL31 (78 aa).

This sequence belongs to the bacterial ribosomal protein bL31 family. Type A subfamily. In terms of assembly, part of the 50S ribosomal subunit.

Its function is as follows. Binds the 23S rRNA. This is Large ribosomal subunit protein bL31 (rpmE) from Rickettsia typhi (strain ATCC VR-144 / Wilmington).